The following is a 608-amino-acid chain: Aspartate--tRNA(Asp/Asn) ligase (608 aa).

Glu-187 contacts L-aspartate. Residues 211–214 (QQFK) are aspartate. L-aspartate contacts are provided by Arg-233 and His-461. 233–235 (RDE) is a binding site for ATP. Glu-495 serves as a coordination point for ATP. Residue Arg-502 coordinates L-aspartate. 547-550 (GLDR) is an ATP binding site.

It belongs to the class-II aminoacyl-tRNA synthetase family. Type 1 subfamily. In terms of assembly, homodimer.

Its subcellular location is the cytoplasm. The catalysed reaction is tRNA(Asx) + L-aspartate + ATP = L-aspartyl-tRNA(Asx) + AMP + diphosphate. Functionally, aspartyl-tRNA synthetase with relaxed tRNA specificity since it is able to aspartylate not only its cognate tRNA(Asp) but also tRNA(Asn). Reaction proceeds in two steps: L-aspartate is first activated by ATP to form Asp-AMP and then transferred to the acceptor end of tRNA(Asp/Asn). The protein is Aspartate--tRNA(Asp/Asn) ligase of Chlorobium phaeobacteroides (strain BS1).